The following is an 845-amino-acid chain: Protein P (845 aa).

Residues 1-179 (MPLSYQHFRK…FCGSPYSWEQ (179 aa)) are terminal protein domain (TP). Residues 180-348 (ELHHGRLVIK…YCLSHLVNLL (169 aa)) form a spacer region. Residues 349–692 (EDWGPCTEHG…YMNLYPVARQ (344 aa)) form a polymerase/reverse transcriptase domain (RT) region. The Reverse transcriptase domain maps to 359–602 (EHHIRIPRTP…YSLNFMGYVI (244 aa)). The Mg(2+) site is built by Asp431, Asp553, and Asp554.

It belongs to the hepadnaviridae P protein family.

It carries out the reaction DNA(n) + a 2'-deoxyribonucleoside 5'-triphosphate = DNA(n+1) + diphosphate. It catalyses the reaction Endonucleolytic cleavage to 5'-phosphomonoester.. Its activity is regulated as follows. Activated by host HSP70 and HSP40 in vitro to be able to bind the epsilon loop of the pgRNA. Because deletion of the RNase H region renders the protein partly chaperone-independent, the chaperones may be needed indirectly to relieve occlusion of the RNA-binding site by this domain. Inhibited by several reverse-transcriptase inhibitors: Lamivudine, Adefovir and Entecavir. Multifunctional enzyme that converts the viral RNA genome into dsDNA in viral cytoplasmic capsids. This enzyme displays a DNA polymerase activity that can copy either DNA or RNA templates, and a ribonuclease H (RNase H) activity that cleaves the RNA strand of RNA-DNA heteroduplexes in a partially processive 3'- to 5'-endonucleasic mode. Neo-synthesized pregenomic RNA (pgRNA) are encapsidated together with the P protein, and reverse-transcribed inside the nucleocapsid. Initiation of reverse-transcription occurs first by binding the epsilon loop on the pgRNA genome, and is initiated by protein priming, thereby the 5'-end of (-)DNA is covalently linked to P protein. Partial (+)DNA is synthesized from the (-)DNA template and generates the relaxed circular DNA (RC-DNA) genome. After budding and infection, the RC-DNA migrates in the nucleus, and is converted into a plasmid-like covalently closed circular DNA (cccDNA). The activity of P protein does not seem to be necessary for cccDNA generation, and is presumably released from (+)DNA by host nuclear DNA repair machinery. In Homo sapiens (Human), this protein is Protein P.